The chain runs to 175 residues: NADH-quinone oxidoreductase subunit I (175 aa).

2 consecutive 4Fe-4S ferredoxin-type domains span residues 69–98 and 115–144; these read KRDEQGRERCTACFCCMWICPANAIHIEAA and KKFEINLLRCIFCGLCEEACPKGAIYLDGT. [4Fe-4S] cluster is bound by residues Cys78, Cys81, Cys84, Cys88, Cys124, Cys127, Cys130, and Cys134.

This sequence belongs to the complex I 23 kDa subunit family. NDH-1 is composed of 14 different subunits. Subunits NuoA, H, J, K, L, M, N constitute the membrane sector of the complex. [4Fe-4S] cluster serves as cofactor.

It localises to the cell inner membrane. The catalysed reaction is a quinone + NADH + 5 H(+)(in) = a quinol + NAD(+) + 4 H(+)(out). Functionally, NDH-1 shuttles electrons from NADH, via FMN and iron-sulfur (Fe-S) centers, to quinones in the respiratory chain. The immediate electron acceptor for the enzyme in this species is believed to be ubiquinone. Couples the redox reaction to proton translocation (for every two electrons transferred, four hydrogen ions are translocated across the cytoplasmic membrane), and thus conserves the redox energy in a proton gradient. This is NADH-quinone oxidoreductase subunit I from Leptospira biflexa serovar Patoc (strain Patoc 1 / Ames).